Here is an 866-residue protein sequence, read N- to C-terminus: Thiamine diphosphate dependent-3-acetyloctanal synthase PigD (866 aa).

The disordered stretch occupies residues K826–S866. The span at W828–A845 shows a compositional bias: basic and acidic residues. Polar residues predominate over residues P849 to S866.

This sequence belongs to the TPP enzyme family. The cofactor is thiamine diphosphate.

It catalyses the reaction (2E)-octenal + pyruvate + H(+) = (S)-3-acetyloctanal + CO2. Its pathway is antibiotic biosynthesis; prodigiosin biosynthesis. Its function is as follows. Involved in the biosynthesis of 2-methyl-3-n-amyl-pyrrole (MAP), one of the terminal products involved in the biosynthesis of the red antibiotic prodigiosin (Pig). Catalyzes the decarboxylation of pyruvate, followed by the modification of the resulting two-carbon fragment acetaldehyde at the C3 position of the 2-octenal (1,2-addition of acetaldehyde) giving 3-acetyloctanal. This Serratia sp. (strain ATCC 39006) (Prodigiosinella confusarubida) protein is Thiamine diphosphate dependent-3-acetyloctanal synthase PigD.